The sequence spans 524 residues: Glycoprotein (524 aa).

Positions 1-19 (MVPQALLFVPLLVFPLCFG) are cleaved as a signal peptide. The Virion surface segment spans residues 20 to 459 (KFPIYTILDK…DLGLPNWGKY (440 aa)). Cystine bridges form between Cys-43-Cys-302, Cys-54-Cys-226, Cys-80-Cys-113, Cys-178-Cys-188, Cys-208-Cys-247, and Cys-242-Cys-271. N-linked (GlcNAc...) asparagine; by host glycosylation is present at Asn-56. Residues Asn-266 and Asn-338 are each glycosylated (N-linked (GlcNAc...) asparagine; by host). A disulfide bond links Cys-363 and Cys-370. Residues 460–480 (VLLSAGALTALMLIIFLMTCC) traverse the membrane as a helical segment. Cys-480 carries the S-palmitoyl cysteine; by host lipid modification. Residues 481–524 (RRVNRSEPTQHNLRGTGREVSVTPQSGKIISSWESHKSGGETRL) lie on the Intravirion side of the membrane.

It belongs to the lyssavirus glycoprotein family. As to quaternary structure, homotrimer. Interacts with matrix protein. Interacts with host TRFC. Interacts with host BST2; this interaction inhibits viral budding by tethering new virions to the cell surface. Interacts with ITGB1. Interacts with host GRM2. Post-translationally, glycosylated and palmitoylated by host. Glycosylation is crucial for glycoprotein export at the cell surface.

It localises to the virion membrane. Attaches the virus to host cellular receptor, inducing endocytosis of the virion by using different host proteins including TFRC, GRM2 and ITGB1. In the endosome, the acidic pH induces conformational changes in the glycoprotein trimer, which trigger fusion between virus and cell membrane. There is convincing in vitro evidence that the muscular form of the nicotinic acetylcholine receptor (nAChR), the neuronal cell adhesion molecule (NCAM), and the p75 neurotrophin receptor (p75NTR) bind glycoprotein and thereby facilitate rabies virus entry into cells. The sequence is that of Glycoprotein (G) from Rabies virus (strain ERA) (RABV).